Reading from the N-terminus, the 617-residue chain is Dihydroxy-acid dehydratase (617 aa).

Asp-81 is a binding site for Mg(2+). Cys-122 is a [2Fe-2S] cluster binding site. Residues Asp-123 and Lys-124 each contribute to the Mg(2+) site. N6-carboxylysine is present on Lys-124. Cys-195 contributes to the [2Fe-2S] cluster binding site. Glu-491 contacts Mg(2+). The active-site Proton acceptor is the Ser-517.

This sequence belongs to the IlvD/Edd family. As to quaternary structure, homodimer. The cofactor is [2Fe-2S] cluster. Mg(2+) is required as a cofactor.

It carries out the reaction (2R)-2,3-dihydroxy-3-methylbutanoate = 3-methyl-2-oxobutanoate + H2O. The enzyme catalyses (2R,3R)-2,3-dihydroxy-3-methylpentanoate = (S)-3-methyl-2-oxopentanoate + H2O. It functions in the pathway amino-acid biosynthesis; L-isoleucine biosynthesis; L-isoleucine from 2-oxobutanoate: step 3/4. It participates in amino-acid biosynthesis; L-valine biosynthesis; L-valine from pyruvate: step 3/4. Functions in the biosynthesis of branched-chain amino acids. Catalyzes the dehydration of (2R,3R)-2,3-dihydroxy-3-methylpentanoate (2,3-dihydroxy-3-methylvalerate) into 2-oxo-3-methylpentanoate (2-oxo-3-methylvalerate) and of (2R)-2,3-dihydroxy-3-methylbutanoate (2,3-dihydroxyisovalerate) into 2-oxo-3-methylbutanoate (2-oxoisovalerate), the penultimate precursor to L-isoleucine and L-valine, respectively. This chain is Dihydroxy-acid dehydratase, found in Buchnera aphidicola subsp. Schizaphis graminum (strain Sg).